A 143-amino-acid polypeptide reads, in one-letter code: MIEDKFMRVLLMFDVPTKSKKEQKLASKFRNNLIKLGYFMLQFSVYMRICKGLSSAKSSIENVKKILPPYGNVRALIITEKQFDKMELLLGGIVFNEKVNNETNLTLFDIDSHGEFKYKNSNNEEIQINKKQEKYHQQNLFEF.

Mg(2+) is bound at residue Asp14.

It belongs to the CRISPR-associated endoribonuclease Cas2 protein family. In terms of assembly, homodimer, forms a heterotetramer with a Cas1 homodimer. Mg(2+) is required as a cofactor.

In terms of biological role, CRISPR (clustered regularly interspaced short palindromic repeat), is an adaptive immune system that provides protection against mobile genetic elements (viruses, transposable elements and conjugative plasmids). CRISPR clusters contain sequences complementary to antecedent mobile elements and target invading nucleic acids. CRISPR clusters are transcribed and processed into CRISPR RNA (crRNA). Functions as a ssRNA-specific endoribonuclease. Involved in the integration of spacer DNA into the CRISPR cassette. The sequence is that of CRISPR-associated endoribonuclease Cas2 from Campylobacter jejuni subsp. jejuni serotype O:2 (strain ATCC 700819 / NCTC 11168).